A 375-amino-acid polypeptide reads, in one-letter code: Chaperone protein DnaJ (375 aa).

Residues 5–70 (GYYEVLGVSK…QKRQAYDQFG (66 aa)) form the J domain. The segment at 142–220 (GKEYKIEIPR…CKGEGLTEKR (79 aa)) adopts a CR-type zinc-finger fold. Zn(2+) contacts are provided by cysteine 155, cysteine 158, cysteine 172, cysteine 175, cysteine 194, cysteine 197, cysteine 208, and cysteine 211. CXXCXGXG motif repeat units follow at residues 155 to 162 (CVDCTGSG), 172 to 179 (CPDCSGTG), 194 to 201 (CPRCKGKG), and 208 to 215 (CKTCKGEG).

The protein belongs to the DnaJ family. As to quaternary structure, homodimer. Zn(2+) is required as a cofactor.

The protein localises to the cytoplasm. Functionally, participates actively in the response to hyperosmotic and heat shock by preventing the aggregation of stress-denatured proteins and by disaggregating proteins, also in an autonomous, DnaK-independent fashion. Unfolded proteins bind initially to DnaJ; upon interaction with the DnaJ-bound protein, DnaK hydrolyzes its bound ATP, resulting in the formation of a stable complex. GrpE releases ADP from DnaK; ATP binding to DnaK triggers the release of the substrate protein, thus completing the reaction cycle. Several rounds of ATP-dependent interactions between DnaJ, DnaK and GrpE are required for fully efficient folding. Also involved, together with DnaK and GrpE, in the DNA replication of plasmids through activation of initiation proteins. The polypeptide is Chaperone protein DnaJ (Leptospira biflexa serovar Patoc (strain Patoc 1 / Ames)).